The sequence spans 298 residues: Cholesterol 25-hydroxylase (298 aa).

Asn5 is a glycosylation site (N-linked (GlcNAc...) asparagine). Helical transmembrane passes span 38 to 58, 88 to 108, and 124 to 144; these read IFPV…FVVL, LGLT…LHWV, and LLSH…AWHL. The region spanning 128 to 263 is the Fatty acid hydroxylase domain; that stretch reads VLICLLLFDT…FTHWDKMLGT (136 aa). Residues 142 to 146 carry the Histidine box-1 motif; that stretch reads WHLLH. The short motif at 157–161 is the Histidine box-2 element; the sequence is HKVHH. N-linked (GlcNAc...) asparagine glycosylation is present at Asn163. A Histidine box-3 motif is present at residues 238–244; that stretch reads HHDMHHS.

It belongs to the sterol desaturase family. The cofactor is Fe cation. In terms of processing, N-glycosylated. In terms of tissue distribution, widely expressed at low level and at higher level in the lung. Weakly expressed in the heart, lung and kidney.

It is found in the endoplasmic reticulum membrane. It catalyses the reaction cholesterol + AH2 + O2 = 25-hydroxycholesterol + A + H2O. The enzyme catalyses cholesterol + NADPH + O2 + H(+) = 25-hydroxycholesterol + NADP(+) + H2O. Catalyzes the formation of 25-hydroxycholesterol from cholesterol, leading to repress cholesterol biosynthetic enzymes. Plays a key role in cell positioning and movement in lymphoid tissues: 25-hydroxycholesterol is an intermediate in biosynthesis of 7-alpha,25-dihydroxycholesterol (7-alpha,25-OHC), an oxysterol that acts as a ligand for the G protein-coupled receptor GPR183/EBI2, a chemotactic receptor for a number of lymphoid cells. May play an important role in regulating lipid metabolism by synthesizing a corepressor that blocks sterol regulatory element binding protein (SREBP) processing. In testis, production of 25-hydroxycholesterol by macrophages may play a role in Leydig cell differentiation. Required to restrain inflammation in macrophages: production of 25-hydroxycholesterol protects macrophages from cholesterol overload, thereby preventing mitochondrial DNA release and subsequent activation of the AIM2 inflammasome. Interferon-stimulated gene which has broad antiviral activities against a wide range of enveloped viruses. The chain is Cholesterol 25-hydroxylase from Mus musculus (Mouse).